We begin with the raw amino-acid sequence, 436 residues long: EPS I polysaccharide export inner membrane protein EpsE (436 aa).

12 consecutive transmembrane segments (helical) span residues 20–40 (VLGL…NILL), 49–69 (FGLF…LATG), 91–111 (LCAF…ALYL), 133–153 (AAIV…QYAM), 160–180 (ATIS…MGPI), 185–205 (LALT…LLVL), 234–254 (VLTT…LAAM), 261–281 (LALF…PATL), 307–327 (ALLF…LLAG), 341–361 (AASS…SVLL), 375–395 (FAMA…ALRL), and 396–416 (GFGA…LILF).

The protein to E.coli bicyclomycin resistance protein (BCR).

Its subcellular location is the cell inner membrane. Its function is as follows. Probably involved in polymerization and/or export of exopolysaccharide EPS I which functions as a virulence factor. May play a role in export of EPS I or its intermediates across the membranes. In Ralstonia solanacearum (Pseudomonas solanacearum), this protein is EPS I polysaccharide export inner membrane protein EpsE (epsE).